Here is a 347-residue protein sequence, read N- to C-terminus: D-alanine--D-alanine ligase (347 aa).

One can recognise an ATP-grasp domain in the interval 134–332 (KLYAKDLGVK…LAQSLPKTPK (199 aa)). 161-216 (LMNFNFPFIIKPNNAGSSLGVNVVKEEKELVYALDGAFEYSKEVLIEPFIQGVKEY) lines the ATP pocket. Asp288, Glu300, and Asn302 together coordinate Mg(2+).

This sequence belongs to the D-alanine--D-alanine ligase family. It depends on Mg(2+) as a cofactor. Mn(2+) serves as cofactor.

The protein localises to the cytoplasm. The catalysed reaction is 2 D-alanine + ATP = D-alanyl-D-alanine + ADP + phosphate + H(+). It participates in cell wall biogenesis; peptidoglycan biosynthesis. Functionally, cell wall formation. The sequence is that of D-alanine--D-alanine ligase from Helicobacter pylori (strain ATCC 700392 / 26695) (Campylobacter pylori).